Here is a 138-residue protein sequence, read N- to C-terminus: Putative pre-16S rRNA nuclease (138 aa).

Belongs to the YqgF nuclease family.

The protein resides in the cytoplasm. Functionally, could be a nuclease involved in processing of the 5'-end of pre-16S rRNA. This is Putative pre-16S rRNA nuclease from Geobacillus sp. (strain WCH70).